A 92-amino-acid polypeptide reads, in one-letter code: UPF0213 protein M28_Spy1146 (92 aa).

The GIY-YIG domain occupies 4-80 (KKAYMYVLEC…KRKTRSQKLA (77 aa)).

This sequence belongs to the UPF0213 family.

This chain is UPF0213 protein M28_Spy1146, found in Streptococcus pyogenes serotype M28 (strain MGAS6180).